The primary structure comprises 427 residues: Glutamate-1-semialdehyde 2,1-aminomutase (427 aa).

Position 265 is an N6-(pyridoxal phosphate)lysine (Lys265).

Belongs to the class-III pyridoxal-phosphate-dependent aminotransferase family. HemL subfamily. Homodimer. It depends on pyridoxal 5'-phosphate as a cofactor.

Its subcellular location is the cytoplasm. It carries out the reaction (S)-4-amino-5-oxopentanoate = 5-aminolevulinate. It participates in porphyrin-containing compound metabolism; protoporphyrin-IX biosynthesis; 5-aminolevulinate from L-glutamyl-tRNA(Glu): step 2/2. The sequence is that of Glutamate-1-semialdehyde 2,1-aminomutase from Edwardsiella ictaluri (strain 93-146).